Consider the following 325-residue polypeptide: Ribosomal RNA small subunit methyltransferase H (325 aa).

Residues 33-35 (GGH), Asp-52, Leu-87, Asp-101, and Gln-108 contribute to the S-adenosyl-L-methionine site. Positions 285 to 325 (AEPAGEVEKADNPRAASVRLRAAERTAPNPDRTQPTIGGAS) are disordered. Residues 315–325 (DRTQPTIGGAS) are compositionally biased toward polar residues.

It belongs to the methyltransferase superfamily. RsmH family.

Its subcellular location is the cytoplasm. It carries out the reaction cytidine(1402) in 16S rRNA + S-adenosyl-L-methionine = N(4)-methylcytidine(1402) in 16S rRNA + S-adenosyl-L-homocysteine + H(+). Its function is as follows. Specifically methylates the N4 position of cytidine in position 1402 (C1402) of 16S rRNA. In Frankia alni (strain DSM 45986 / CECT 9034 / ACN14a), this protein is Ribosomal RNA small subunit methyltransferase H.